Here is a 390-residue protein sequence, read N- to C-terminus: Succinyl-diaminopimelate desuccinylase (390 aa).

His74 is a binding site for Zn(2+). The active site involves Asp76. Asp107 contacts Zn(2+). Glu140 acts as the Proton acceptor in catalysis. Residues Glu141, Glu169, and His363 each coordinate Zn(2+).

Belongs to the peptidase M20A family. DapE subfamily. As to quaternary structure, homodimer. Requires Zn(2+) as cofactor. Co(2+) is required as a cofactor.

It carries out the reaction N-succinyl-(2S,6S)-2,6-diaminopimelate + H2O = (2S,6S)-2,6-diaminopimelate + succinate. It functions in the pathway amino-acid biosynthesis; L-lysine biosynthesis via DAP pathway; LL-2,6-diaminopimelate from (S)-tetrahydrodipicolinate (succinylase route): step 3/3. Catalyzes the hydrolysis of N-succinyl-L,L-diaminopimelic acid (SDAP), forming succinate and LL-2,6-diaminopimelate (DAP), an intermediate involved in the bacterial biosynthesis of lysine and meso-diaminopimelic acid, an essential component of bacterial cell walls. The sequence is that of Succinyl-diaminopimelate desuccinylase from Bartonella quintana (strain Toulouse) (Rochalimaea quintana).